The following is a 571-amino-acid chain: Proline--tRNA ligase (571 aa).

Belongs to the class-II aminoacyl-tRNA synthetase family. ProS type 1 subfamily. In terms of assembly, homodimer.

It localises to the cytoplasm. It carries out the reaction tRNA(Pro) + L-proline + ATP = L-prolyl-tRNA(Pro) + AMP + diphosphate. In terms of biological role, catalyzes the attachment of proline to tRNA(Pro) in a two-step reaction: proline is first activated by ATP to form Pro-AMP and then transferred to the acceptor end of tRNA(Pro). As ProRS can inadvertently accommodate and process non-cognate amino acids such as alanine and cysteine, to avoid such errors it has two additional distinct editing activities against alanine. One activity is designated as 'pretransfer' editing and involves the tRNA(Pro)-independent hydrolysis of activated Ala-AMP. The other activity is designated 'posttransfer' editing and involves deacylation of mischarged Ala-tRNA(Pro). The misacylated Cys-tRNA(Pro) is not edited by ProRS. This Shewanella putrefaciens (strain CN-32 / ATCC BAA-453) protein is Proline--tRNA ligase.